Reading from the N-terminus, the 469-residue chain is tRNA modification GTPase MnmE (469 aa).

Residues Arg38, Glu95, and Arg134 each coordinate (6S)-5-formyl-5,6,7,8-tetrahydrofolate. A TrmE-type G domain is found at 230–392 (GIRVALVGPP…LRRGLAALVD (163 aa)). GTP contacts are provided by residues 240-245 (NAGKSS), 259-265 (SAQAGTT), and 284-287 (DTAG). Ser244 and Thr265 together coordinate Mg(2+). Lys468 contributes to the (6S)-5-formyl-5,6,7,8-tetrahydrofolate binding site.

The protein belongs to the TRAFAC class TrmE-Era-EngA-EngB-Septin-like GTPase superfamily. TrmE GTPase family. As to quaternary structure, homodimer. Heterotetramer of two MnmE and two MnmG subunits. Requires K(+) as cofactor.

It is found in the cytoplasm. In terms of biological role, exhibits a very high intrinsic GTPase hydrolysis rate. Involved in the addition of a carboxymethylaminomethyl (cmnm) group at the wobble position (U34) of certain tRNAs, forming tRNA-cmnm(5)s(2)U34. This is tRNA modification GTPase MnmE from Halorhodospira halophila (strain DSM 244 / SL1) (Ectothiorhodospira halophila (strain DSM 244 / SL1)).